Reading from the N-terminus, the 563-residue chain is RUN and FYVE domain-containing protein 4 (563 aa).

The 134-residue stretch at 33–166 folds into the RUN domain; it reads TETSAELHRL…VAFNLDLQRP (134 aa). Disordered stretches follow at residues 176 to 327 and 375 to 397; these read SESR…TTEG and KKSS…MQED. Basic and acidic residues-rich tracts occupy residues 196-205 and 263-284; these read GFPEEVRCSR and ETER…RKFL. A compositionally biased stretch (polar residues) spans 285-295; the sequence is ENSTASIQQQR. A compositionally biased stretch (basic and acidic residues) spans 297–312; it reads RAKDVKMQLTGRKVEG. Residues 385 to 396 show a composition bias toward polar residues; that stretch reads EWTGVTSGTMQE. The stretch at 421-462 forms a coiled coil; that stretch reads QAQCQEQLRAQEAELQALQEQLSRCQKERALLQVKLEQKQQE. The segment at 428–558 adopts an FYVE-type zinc-finger fold; that stretch reads LRAQEAELQA…RCCPTCAQQE (131 aa). Residues Cys-513, Cys-516, Cys-529, Cys-532, Cys-537, Cys-540, Cys-551, and Cys-554 each coordinate Zn(2+).

Forms homodimers (via coiled coil domain). Forms a ternary complex with RAB7A and LAMP2; the interaction with RAB7A is mediated by RUFY4 (via RUN and coiled coil domains). Interacts with GTP-, but not GDP-bound ARL8A and ARL8B. Interacts with dynactin/DCTN1 and the dynein intermediate chain DYNC1I1/2. As to expression, expressed in dendritic cells.

The protein localises to the cytoplasmic vesicle. The protein resides in the autophagosome. Its subcellular location is the lysosome. In terms of biological role, ARL8 effector that promotes the coupling of endolysosomes to dynein-dynactin for retrograde transport along microtubules. Acts by binding both GTP-bound ARL8 and dynein-dynactin. In nonneuronal cells, promotes concentration of endolysosomes in the juxtanuclear area. In hippocampal neurons, drives retrograde transport of endolysosomes from the axon to the soma. Positive regulator of macroautophagy in dendritic cells. Increases autophagic flux, probably by stimulating both autophagosome formation and facilitating tethering with lysosomes. Binds to phosphatidylinositol 3-phosphate (PtdIns3P) through its FYVE-type zinc finger. Positive regulator of osteosclast bone-resorbing activity, possibly by promoting late endosome-lysosome fusion by acting as an adapter protein between RAB7A on late endosomes and LAMP2 on primary lysosomes. This Mus musculus (Mouse) protein is RUN and FYVE domain-containing protein 4 (Rufy4).